Here is a 1547-residue protein sequence, read N- to C-terminus: MADIKSMFNKMSSPKQNGTGEPAPAKGQKGAIEKIYQKKSQLEHILLRPDTYIGSVERATETMWVYDKVKECMMQKELTSVPDCSFPGLYKIYDEILVNAADNKQRDPKMDVIKIDINQETNTISVYNNGSGIPVVMHKDEKMYVPTMIFGHLLTSSNYNDEEEKVTGGRNGYGAKLCNIFSTKFTVETASKQYKKHFKQTWGSNMTKASEPKIKDSGKDDDFTKIVFSPDLAKFKMEKLEDDIVLLMSRRAYDVAASSQGVKVYLNGERLKINKFKDYVDLYIKGKDDENGQPLKVVYEKVSDRWEVALTISDMGFQQVSFVNSIATTKGGKHVDTVADSVVKNVLEVLKKKNKGGVNIKPYQVKTHMWLFVNCLIVNPTFDSQTKENMTLQAKSFGSKCNLSEKFITAVTKCGLVESVLTWAKFKAQDQLVKASGKKQSKLKGIPKLEDANDAGTKNAHLCTLILTEGDSAKTLAVSGLSVVGRDHYGVFPLEGKPLNVRDASHKQVLENVEINNLIKILGLQYKKKYNSVDDLKTLRYGKVMIMADQDQDGSHIKGLIINFIHHNWPELLKLPFLEEFITPIVKATKKDKEISFYSLPEFEEWKKETENHHTYNIKYYKGLGTSTSKEAKEYFQNMDRHRIRFKYSGPTDDHHIELAFSKKGADQRKEWLTNHMDEVKRRKEIGLSERYLYTKETKTVTYSDFVNLELVLFSNGDNVRSIPSMIDGLKPGQRKVIFTCIKRNDKREVKVAQLAGSVAEHSAYHHGEQSLAMTIVNLAQNYVGSNNINLLEPRGQFGTRLSGGKDSASPRYIFTLMSPLTRLIFHPHDDPLLVHEFEDNQKIEPVYYLPIIPMVLVNGVEGIGTGWSTKIPNYNPRDIAENLRRLLDGEKPKVMHPWYKNFKGNVEGFGDKYVISGEAAILPGDKIEITELPVGTWTHNYKENVLEPMLGTDKVKPLISEYREYNTDTTVRFVVSLLPGKLSEIEAEGIHKVFKLQTTISMTCMNAFDYNCCLEKYDKVEEILREFYDLRVKYYVRRKDYLEGQLQAEADKLSNQARFILKKCDKGLVIENKKRKAMVEELIKRGYAPDPIADWKKRASKIQGLTALEDDDAQESEEEEPEPDPKGKPVDPDKAFQQLKEVKKFNYLLGMSMWMLTKEKKDELLKQRDQKLTELTTLKNKTAPMLWREDLDAFLIKLDEVEDKERREELNVNKKTSKAMAGKKNRKSMFDIIPSENGRRVEPKISDDLIKRIQAAEKAKTRKEIKKEYDPDDPTGISPSSGEKKPKARVKKEKPEKAEKPDKVDKAEKTDGLKQTKLTFKKEPKKKKMTFSGSSSGEMSASDAEVEVLVPRERTNARRAATRVQKYKDGSDDSGSDSEPELLDNKIDSDHEAPQTLSISDEDDDFNIKKNPAKKPAEMDSDCLFDSLIEDAKKDEPQKTLTKSKSESILIRRLNIERQRRCDTSVPPKEKAAPKRKLMNVDKDEKKTKKRPARVMLDQDSDDEDSIFDSKKGKKKTAANPKKKAKKKVESDSESDFNISDSSLSD.

The segment at 8-30 (FNKMSSPKQNGTGEPAPAKGQKG) is disordered. Residues 9–19 (NKMSSPKQNGT) show a composition bias toward polar residues. Residues Asn99, Asn128, 156–158 (SSN), and 169–176 (GRNGYGAK) each bind ATP. An interaction with DNA region spans residues 351 to 353 (KKK). 385 to 387 (QTK) contacts ATP. In terms of domain architecture, Toprim spans 463-580 (CTLILTEGDS…ELLKLPFLEE (118 aa)). Mg(2+) is bound by residues Glu469, Asp549, and Asp551. The Topo IIA-type catalytic domain maps to 723-1192 (IPSMIDGLKP…TAPMLWREDL (470 aa)). Tyr813 acts as the O-(5'-phospho-DNA)-tyrosine intermediate in catalysis. Residues 996-1005 (KLQTTISMTC) form an interaction with DNA region. Disordered stretches follow at residues 1107–1134 (TALEDDDAQESEEEEPEPDPKGKPVDPD), 1209–1249 (EELN…ISDD), 1261–1423 (KTRK…MDSD), and 1459–1547 (RQRR…SLSD). Residues 1109–1123 (LEDDDAQESEEEEPE) are compositionally biased toward acidic residues. Positions 1124–1134 (PDPKGKPVDPD) are enriched in basic and acidic residues. The segment covering 1216 to 1228 (KTSKAMAGKKNRK) has biased composition (basic residues). 2 stretches are compositionally biased toward basic and acidic residues: residues 1238-1249 (NGRRVEPKISDD) and 1294-1315 (EKPEKAEKPDKVDKAEKTDGLK). Low complexity predominate over residues 1331–1344 (TFSGSSSGEMSASD). Residues 1373–1383 (DDSGSDSEPEL) show a composition bias toward acidic residues. Composition is skewed to basic and acidic residues over residues 1384–1394 (LDNKIDSDHEA) and 1459–1488 (RQRRCDTSVPPKEKAAPKRKLMNVDKDEKK). Residues 1513-1528 (KGKKKTAANPKKKAKK) are compositionally biased toward basic residues. Polar residues predominate over residues 1537 to 1547 (DFNISDSSLSD).

This sequence belongs to the type II topoisomerase family. Homodimer. The cofactor is Mg(2+). Requires Mn(2+) as cofactor. Ca(2+) is required as a cofactor.

It is found in the nucleus. The catalysed reaction is ATP-dependent breakage, passage and rejoining of double-stranded DNA.. Functionally, control of topological states of DNA by transient breakage and subsequent rejoining of DNA strands. Topoisomerase II makes double-strand breaks. The sequence is that of DNA topoisomerase 2 (TOP2) from Bombyx mori (Silk moth).